The sequence spans 139 residues: Actin-depolymerizing factor 1 (139 aa).

One can recognise an ADF-H domain in the interval 5–139 (ASGMAVHDDC…DLDVFRSRAN (135 aa)). At Ser6 the chain carries Phosphoserine; by CPK3.

It belongs to the actin-binding proteins ADF family. In terms of assembly, interacts with the 14-3-3-like protein GRF6/AFT1. Post-translationally, phosphorylation at Ser-6 by CPK3/CDPK6 inhibits actin-depolimerizing activity. Expressed in vascular tissues of all organs.

The protein localises to the cytoplasm. Its subcellular location is the cytoskeleton. In terms of biological role, actin-depolymerizing protein. Stimulates F-actin depolymerization. Involved in plant development, cell organ expansion and flowering by controlling breakdown of thick actin cables. Severs actin filaments or bundles and promotes actin cytoskeleton disassembly. Binds monomeric actin (G-actin) with a marked preference for the ADP-loaded form and inhibits the rate of nucleotide exchange on G-actin. The chain is Actin-depolymerizing factor 1 (ADF1) from Arabidopsis thaliana (Mouse-ear cress).